A 548-amino-acid polypeptide reads, in one-letter code: Glucose-6-phosphate isomerase (548 aa).

The active-site Proton donor is the glutamate 355. Residues histidine 386 and lysine 511 contribute to the active site.

It belongs to the GPI family.

It localises to the cytoplasm. The catalysed reaction is alpha-D-glucose 6-phosphate = beta-D-fructose 6-phosphate. Its pathway is carbohydrate biosynthesis; gluconeogenesis. It functions in the pathway carbohydrate degradation; glycolysis; D-glyceraldehyde 3-phosphate and glycerone phosphate from D-glucose: step 2/4. Its function is as follows. Catalyzes the reversible isomerization of glucose-6-phosphate to fructose-6-phosphate. The chain is Glucose-6-phosphate isomerase from Wigglesworthia glossinidia brevipalpis.